The sequence spans 453 residues: Presenilin-like protein At1g08700 (453 aa).

The Cytoplasmic segment spans residues 1–8; sequence MESSILDS. A helical membrane pass occupies residues 9–29; that stretch reads LGVEIIGVMAPVSICMFLVVL. Residues 30-68 are Lumenal-facing; sequence LTYSLSVTSDPQIRSAANLIYIENPSDSTTVKLEGSLAN. The chain crosses the membrane as a helical span at residues 69–89; sequence AIVFVVLIAAVTFILVLLFYY. At 90 to 103 the chain is on the cytoplasmic side; it reads NFTNFLKHYMRFSA. The helical transmembrane segment at 104-124 threads the bilayer; that stretch reads FFVLGTMGGAIFLSIIQHFSI. Residues 125–132 are Lumenal-facing; the sequence is PVDSITCF. Residues 133-153 traverse the membrane as a helical segment; sequence ILLFNFTILGTLSVFAGGIPI. Topologically, residues 154-159 are cytoplasmic; that stretch reads VLRQCY. Helical transmembrane passes span 160–180 and 181–201; these read MVVM…WTTW and FILV…GGPL. The active site involves aspartate 190. Over 202 to 369 the chain is Cytoplasmic; the sequence is KLLVELASSR…VVDISNRGIK (168 aa). 2 disordered regions span residues 226–248 and 292–329; these read VSSG…GGGV and IGNG…DRES. Over residues 227 to 240 the composition is skewed to low complexity; it reads SSGNQRRNRGSSLR. The residue at position 296 (serine 296) is a Phosphoserine. The span at 309–320 shows a compositional bias: polar residues; it reads PSASEHSTSVGT. The chain crosses the membrane as a helical span at residues 370-390; sequence LGLGDFIFYSVLVGRAAMYDL. Residue aspartate 374 is part of the active site. At 391 to 392 the chain is on the lumenal side; sequence MT. Residues 393–413 traverse the membrane as a helical segment; the sequence is VYACYLAIISGLGCTLILLSV. Topologically, residues 414 to 417 are cytoplasmic; it reads YNRA. Positions 418 to 438 form an intramembrane region, helical; that stretch reads LPALPISIMLGVVFYFLTRLL. A PAL motif is present at residues 419–421; sequence PAL. Residues 439–453 are Cytoplasmic-facing; it reads MEPFVVGVTTNLMMF.

The protein belongs to the peptidase A22A family. In terms of assembly, homodimer. Probable component of the gamma-secretase complex, a complex composed of a presenilin homodimer, nicastrin, APH1 and PEN2.

It is found in the endoplasmic reticulum membrane. Its subcellular location is the golgi apparatus membrane. Probable subunit of the gamma-secretase complex, an endoprotease complex that catalyzes the intramembrane cleavage of integral membrane proteins such as Notch receptors. This chain is Presenilin-like protein At1g08700, found in Arabidopsis thaliana (Mouse-ear cress).